Consider the following 117-residue polypeptide: Inner kinetochore subunit MHF1 (117 aa).

Belongs to the TAF9 family. CENP-S/MHF1 subfamily. As to quaternary structure, the MHF histone-fold complex is a heterotetramer of 2 MHF1-MHF2 heterodimers. Together with MPH1/FANCM, forms the FANCM-MHF complex. Component of the inner kinetochore constitutive centromere-associated network (CCAN).

DsDNA-binding component of a FANCM-MHF complex involved in DNA damage repair and genome maintenance. FANCM-MHF promotes gene conversion at blocked replication forks, probably by reversal of the stalled fork. Component of the kinetochore, a multiprotein complex that assembles on centromeric DNA and attaches chromosomes to spindle microtubules, mediating chromosome segregation and sister chromatid segregation during meiosis and mitosis. Component of the inner kinetochore constitutive centromere-associated network (CCAN), which serves as a structural platform for outer kinetochore assembly. This chain is Inner kinetochore subunit MHF1, found in Candida albicans (strain SC5314 / ATCC MYA-2876) (Yeast).